The following is a 426-amino-acid chain: Proline--tRNA ligase (426 aa).

It belongs to the class-II aminoacyl-tRNA synthetase family. ProS type 2 subfamily. In terms of assembly, homodimer.

The protein resides in the cytoplasm. The enzyme catalyses tRNA(Pro) + L-proline + ATP = L-prolyl-tRNA(Pro) + AMP + diphosphate. Functionally, catalyzes the attachment of proline to tRNA(Pro) in a two-step reaction: proline is first activated by ATP to form Pro-AMP and then transferred to the acceptor end of tRNA(Pro). The chain is Proline--tRNA ligase from Rickettsia africae (strain ESF-5).